Here is a 545-residue protein sequence, read N- to C-terminus: Hydroxylamine reductase (545 aa).

[4Fe-4S] cluster-binding residues include Cys-3, Cys-6, Cys-15, and Cys-21. Hybrid [4Fe-2O-2S] cluster contacts are provided by His-240, Glu-264, Cys-309, Cys-401, Cys-429, Cys-454, Glu-488, and Lys-490. Cys-401 carries the post-translational modification Cysteine persulfide.

Belongs to the HCP family. The cofactor is [4Fe-4S] cluster. Requires hybrid [4Fe-2O-2S] cluster as cofactor.

The protein resides in the cytoplasm. It carries out the reaction A + NH4(+) + H2O = hydroxylamine + AH2 + H(+). Catalyzes the reduction of hydroxylamine to form NH(3) and H(2)O. In Rippkaea orientalis (strain PCC 8801 / RF-1) (Cyanothece sp. (strain PCC 8801)), this protein is Hydroxylamine reductase.